Reading from the N-terminus, the 43-residue chain is Protein PsbN (43 aa).

Residues 5–27 (TVFSIFISCLLLSLTGYSLYTAF) form a helical membrane-spanning segment.

Belongs to the PsbN family.

The protein resides in the plastid. It localises to the chloroplast thylakoid membrane. May play a role in photosystem I and II biogenesis. This is Protein PsbN from Chlorokybus atmophyticus (Soil alga).